The sequence spans 301 residues: Probable alpha-L-glutamate ligase (301 aa).

The region spanning 104-287 (LQLLSRKGIG…VADMIFEFIE (184 aa)) is the ATP-grasp domain. Residues K141, 178-179 (EF), D187, and 211-213 (RSN) contribute to the ATP site. Mg(2+)-binding residues include D248, E260, and N262. Mn(2+)-binding residues include D248, E260, and N262.

Belongs to the RimK family. It depends on Mg(2+) as a cofactor. Requires Mn(2+) as cofactor.

This is Probable alpha-L-glutamate ligase from Vibrio atlanticus (strain LGP32) (Vibrio splendidus (strain Mel32)).